Reading from the N-terminus, the 305-residue chain is Tyrosine recombinase XerC (305 aa).

The 93-residue stretch at 1–93 folds into the Core-binding (CB) domain; the sequence is MVLDGFAAHF…SWRQYCVWLV (93 aa). A Tyr recombinase domain is found at 114 to 294; it reads RVPKALPQEW…DFDHIARLYD (181 aa). Active-site residues include Arg155, Lys179, His246, Arg249, and His272. Tyr281 (O-(3'-phospho-DNA)-tyrosine intermediate) is an active-site residue.

It belongs to the 'phage' integrase family. XerC subfamily. Forms a cyclic heterotetrameric complex composed of two molecules of XerC and two molecules of XerD.

Its subcellular location is the cytoplasm. Site-specific tyrosine recombinase, which acts by catalyzing the cutting and rejoining of the recombining DNA molecules. The XerC-XerD complex is essential to convert dimers of the bacterial chromosome into monomers to permit their segregation at cell division. It also contributes to the segregational stability of plasmids. In Neisseria meningitidis serogroup C / serotype 2a (strain ATCC 700532 / DSM 15464 / FAM18), this protein is Tyrosine recombinase XerC.